A 239-amino-acid chain; its full sequence is Probable transcriptional regulatory protein LMOf2365_0385 (239 aa).

It belongs to the TACO1 family. YeeN subfamily.

It is found in the cytoplasm. The sequence is that of Probable transcriptional regulatory protein LMOf2365_0385 from Listeria monocytogenes serotype 4b (strain F2365).